The following is a 310-amino-acid chain: Aspartate carbamoyltransferase catalytic subunit (310 aa).

Arginine 55 and threonine 56 together coordinate carbamoyl phosphate. An L-aspartate-binding site is contributed by lysine 85. Carbamoyl phosphate is bound by residues arginine 106, histidine 135, and glutamine 138. Residues arginine 168 and arginine 230 each contribute to the L-aspartate site. Positions 268 and 269 each coordinate carbamoyl phosphate.

Belongs to the aspartate/ornithine carbamoyltransferase superfamily. ATCase family. Heterododecamer (2C3:3R2) of six catalytic PyrB chains organized as two trimers (C3), and six regulatory PyrI chains organized as three dimers (R2).

It catalyses the reaction carbamoyl phosphate + L-aspartate = N-carbamoyl-L-aspartate + phosphate + H(+). It participates in pyrimidine metabolism; UMP biosynthesis via de novo pathway; (S)-dihydroorotate from bicarbonate: step 2/3. Its function is as follows. Catalyzes the condensation of carbamoyl phosphate and aspartate to form carbamoyl aspartate and inorganic phosphate, the committed step in the de novo pyrimidine nucleotide biosynthesis pathway. The sequence is that of Aspartate carbamoyltransferase catalytic subunit from Buchnera aphidicola subsp. Acyrthosiphon pisum (strain APS) (Acyrthosiphon pisum symbiotic bacterium).